The following is a 483-amino-acid chain: Proline--tRNA ligase (483 aa).

Belongs to the class-II aminoacyl-tRNA synthetase family. ProS type 3 subfamily. In terms of assembly, homodimer.

It localises to the cytoplasm. It catalyses the reaction tRNA(Pro) + L-proline + ATP = L-prolyl-tRNA(Pro) + AMP + diphosphate. In terms of biological role, catalyzes the attachment of proline to tRNA(Pro) in a two-step reaction: proline is first activated by ATP to form Pro-AMP and then transferred to the acceptor end of tRNA(Pro). The chain is Proline--tRNA ligase from Sulfurisphaera tokodaii (strain DSM 16993 / JCM 10545 / NBRC 100140 / 7) (Sulfolobus tokodaii).